A 250-amino-acid polypeptide reads, in one-letter code: uncharacterized protein (250 aa).

A compositionally biased stretch (basic and acidic residues) spans 207 to 226 (LNDRDAINKSEEARKAREEV). The tract at residues 207-250 (LNDRDAINKSEEARKAREEVFIPSEPSKPSIASKRSSASKSTKS) is disordered. Residues 233–250 (SKPSIASKRSSASKSTKS) show a composition bias toward low complexity.

It localises to the plastid. It is found in the chloroplast. This is an uncharacterized protein from Chlorella vulgaris (Green alga).